We begin with the raw amino-acid sequence, 365 residues long: Eukaryotic translation initiation factor 3 subunit H (365 aa).

The 150-residue stretch at 11-160 (VKVEALVVMK…LRAFRLSPKF (150 aa)) folds into the MPN domain.

Belongs to the eIF-3 subunit H family. As to quaternary structure, component of the eukaryotic translation initiation factor 3 (eIF-3) complex.

Its subcellular location is the cytoplasm. Functionally, component of the eukaryotic translation initiation factor 3 (eIF-3) complex, which is involved in protein synthesis of a specialized repertoire of mRNAs and, together with other initiation factors, stimulates binding of mRNA and methionyl-tRNAi to the 40S ribosome. The eIF-3 complex specifically targets and initiates translation of a subset of mRNAs involved in cell proliferation. This chain is Eukaryotic translation initiation factor 3 subunit H, found in Aspergillus clavatus (strain ATCC 1007 / CBS 513.65 / DSM 816 / NCTC 3887 / NRRL 1 / QM 1276 / 107).